A 259-amino-acid chain; its full sequence is Ribosomal RNA small subunit methyltransferase A (259 aa).

The S-adenosyl-L-methionine site is built by Asn-13, Leu-15, Gly-40, Glu-61, Asp-85, and Asn-103.

The protein belongs to the class I-like SAM-binding methyltransferase superfamily. rRNA adenine N(6)-methyltransferase family. RsmA subfamily.

Its subcellular location is the cytoplasm. The enzyme catalyses adenosine(1518)/adenosine(1519) in 16S rRNA + 4 S-adenosyl-L-methionine = N(6)-dimethyladenosine(1518)/N(6)-dimethyladenosine(1519) in 16S rRNA + 4 S-adenosyl-L-homocysteine + 4 H(+). Specifically dimethylates two adjacent adenosines (A1518 and A1519) in the loop of a conserved hairpin near the 3'-end of 16S rRNA in the 30S particle. May play a critical role in biogenesis of 30S subunits. This Neisseria meningitidis serogroup B (strain ATCC BAA-335 / MC58) protein is Ribosomal RNA small subunit methyltransferase A.